The primary structure comprises 296 residues: Ribosomal protein L11 methyltransferase (296 aa).

4 residues coordinate S-adenosyl-L-methionine: T139, G163, D185, and N232.

The protein belongs to the methyltransferase superfamily. PrmA family.

Its subcellular location is the cytoplasm. It carries out the reaction L-lysyl-[protein] + 3 S-adenosyl-L-methionine = N(6),N(6),N(6)-trimethyl-L-lysyl-[protein] + 3 S-adenosyl-L-homocysteine + 3 H(+). Its function is as follows. Methylates ribosomal protein L11. In Picosynechococcus sp. (strain ATCC 27264 / PCC 7002 / PR-6) (Agmenellum quadruplicatum), this protein is Ribosomal protein L11 methyltransferase.